A 386-amino-acid chain; its full sequence is Sphingosine 1-phosphate receptor 4 (386 aa).

Residues 1-56 (MNISTWSTLVTPESCHRLAASGHSLLIVLHYNHSGRLASRGGSEDGGGLGMLRGPS) lie on the Extracellular side of the membrane. Residues N2 and N32 are each glycosylated (N-linked (GlcNAc...) asparagine). A helical membrane pass occupies residues 57 to 77 (VAAGCLVVLENAMVLAAIAIY). Over 78–87 (MRSRRWVYYC) the chain is Cytoplasmic. A helical membrane pass occupies residues 88–108 (LLNITLSDLLTGLAYVVNVLL). At 109 to 120 (SGTRTFQLSPVH) the chain is on the extracellular side. The helical transmembrane segment at 121 to 141 (WFLREGLLFMALAASTFSLLF) threads the bilayer. Over 142–163 (TAGERFATMVRVAESGATKTSR) the chain is Cytoplasmic. A helical transmembrane segment spans residues 164 to 184 (VYGCIGLCWLLAAILGLLPLL). Residues 185–208 (GWNCVCAFPRCSSLLPLYSKGYVL) lie on the Extracellular side of the membrane. Residues 209-229 (FCVVVFALILVAILSLYGAIF) traverse the membrane as a helical segment. The Cytoplasmic segment spans residues 230–254 (RVVRANGQKSPRPPARRKSRRLLNT). The helical transmembrane segment at 255 to 275 (VLMILVAFVVCWGPLFGLLLA) threads the bilayer. The Extracellular segment spans residues 276–290 (DIFGSNVWAQEYLRG). A helical transmembrane segment spans residues 291 to 311 (MDWILALAVFNSAINPLIYSF). Over 312 to 386 (RSREVQRAVL…LSSISSVRST (75 aa)) the chain is Cytoplasmic. C325 is lipidated: S-palmitoyl cysteine.

It belongs to the G-protein coupled receptor 1 family. Specifically expressed in fetal and adult lymphoid and hematopoietic tissue. Expressed in lung, spleen, thymus and lymph node but absent in other non-lymphatic tissue. Coexpressed with GNA15 at the same relative levels in all tissues examined, with the highest levels in adult spleen and lung.

It is found in the cell membrane. Its function is as follows. Receptor for the lysosphingolipid sphingosine 1-phosphate (S1P). S1P is a bioactive lysophospholipid that elicits diverse physiological effect on most types of cells and tissues. May be involved in cell migration processes that are specific for lymphocytes. The chain is Sphingosine 1-phosphate receptor 4 (S1pr4) from Mus musculus (Mouse).